Here is a 372-residue protein sequence, read N- to C-terminus: Probable O-methyltransferase 2 (372 aa).

Positions 216, 259, and 273 each coordinate S-adenosyl-L-methionine. Residue His277 is the Proton acceptor of the active site.

The protein belongs to the class I-like SAM-binding methyltransferase superfamily. Cation-independent O-methyltransferase family. COMT subfamily. Homodimer. In terms of tissue distribution, expressed predominantly in root hairs.

In terms of biological role, O-methyltransferase of unknown substrate specificity. Not active on resorcinol, orcinol, guaiacol, eugenol, ferulic acid, p-coumaric acid, catechol, caffeic acid or monomethyl ethers of resorcinol or orcinol. This chain is Probable O-methyltransferase 2 (OMT2), found in Sorghum bicolor (Sorghum).